The sequence spans 398 residues: tRNA-specific 2-thiouridylase MnmA (398 aa).

ATP contacts are provided by residues 19 to 26 (AMSGGVDS) and Leu45. Residue Cys113 is the Nucleophile of the active site. Residues Cys113 and Cys210 are joined by a disulfide bond. Residue Gly137 participates in ATP binding. Residues 160–162 (RDQ) are interaction with tRNA. Cys210 (cysteine persulfide intermediate) is an active-site residue.

It belongs to the MnmA/TRMU family.

The protein localises to the cytoplasm. It catalyses the reaction S-sulfanyl-L-cysteinyl-[protein] + uridine(34) in tRNA + AH2 + ATP = 2-thiouridine(34) in tRNA + L-cysteinyl-[protein] + A + AMP + diphosphate + H(+). Catalyzes the 2-thiolation of uridine at the wobble position (U34) of tRNA, leading to the formation of s(2)U34. The protein is tRNA-specific 2-thiouridylase MnmA of Rhodopseudomonas palustris (strain HaA2).